The chain runs to 595 residues: Actin-histidine N-methyltransferase (595 aa).

The tract at residues 1 to 22 is disordered; it reads MGKKSRVKTQKSGTGATATVSP. Positions 10 to 20 are enriched in polar residues; sequence QKSGTGATATV. S-adenosyl-L-methionine-binding positions include R75, 104 to 106, R254, 275 to 279, and 325 to 327; these read EGF, DMCNH, and SGF. In terms of domain architecture, SET spans 94-314; it reads EGFEMVNFKE…AGEQIYIFYG (221 aa). The residue at position 513 (S513) is a Phosphoserine. The span at 549 to 573 shows a compositional bias: polar residues; it reads ENGLVNGENSIPNGTRSENENLNQE. A disordered region spans residues 549–595; sequence ENGLVNGENSIPNGTRSENENLNQEGSKRAVEDAKGSSSDSTDEVKE. Basic and acidic residues predominate over residues 574–583; that stretch reads GSKRAVEDAK.

The protein belongs to the class V-like SAM-binding methyltransferase superfamily. SETD3 actin-histidine methyltransferase family. As to quaternary structure, interacts with MYOD1. In terms of processing, phosphorylated by GSK3B, which is required for recognition by the SCF(FBXW7) complex and subsequent degradation. Ubiquitinated by the SCF(FBXW7) complex following phosphorylation by GSK3B, leading to its degradation by the proteasome.

It is found in the cytoplasm. The protein resides in the nucleus. The enzyme catalyses L-histidyl-[protein] + S-adenosyl-L-methionine = N(tele)-methyl-L-histidyl-[protein] + S-adenosyl-L-homocysteine + H(+). Functionally, protein-histidine N-methyltransferase that specifically mediates 3-methylhistidine (tele-methylhistidine) methylation of actin at 'His-73'. Histidine methylation of actin is required for smooth muscle contraction of the laboring uterus during delivery. Does not have protein-lysine N-methyltransferase activity and probably only catalyzes histidine methylation of actin. This is Actin-histidine N-methyltransferase from Plecturocebus moloch (Dusky titi monkey).